We begin with the raw amino-acid sequence, 6885 residues long: Nesprin-2 (6885 aa).

The segment at 1-286 (MASSPELPTE…YVAQFLQYSK (286 aa)) is actin-binding. Topologically, residues 1-6834 (MASSPELPTE…QRSFLSRVVR (6834 aa)) are cytoplasmic. Calponin-homology (CH) domains are found at residues 31-136 (DTQK…LHFH) and 181-286 (MSAR…QYSK). 7 Spectrin repeats span residues 297–378 (GKVK…HQIN), 379–472 (AWKI…RINN), 473–575 (ILEK…KNIY), 576–680 (NVKS…KQDQ), 735–838 (VAKD…KNLT), 839–932 (DVSP…LHHE), and 933–1034 (LSLY…KCAS). A coiled-coil region spans residues 297 to 6782 (GKVKDAMGWL…PASPLPSFDE (6486 aa)). A Phosphoserine modification is found at Ser-841. Position 955 is an N6-acetyllysine (Lys-955). Polar residues predominate over residues 1042–1059 (PTAGGTSKNEGTITTSEN). The disordered stretch occupies residues 1042–1084 (PTAGGTSKNEGTITTSENRGGDPHSEAPFAKSDNQPSTEKAME). Spectrin repeat units lie at residues 1121 to 1212 (TYRD…TLNT), 1263 to 1323 (NIQD…DTLK), 1324 to 1419 (ALED…YGVQ), 1420 to 1524 (EEFT…ALVT), 1525 to 1636 (ECLE…KTED), 1637 to 1738 (YYEN…TGES), 1739 to 1830 (NCHA…TKKS), 1831 to 1938 (VLQD…AKEL), 1939 to 2036 (EDSL…EEED), 2037 to 2132 (KLLP…LAST), 2133 to 2243 (YLSH…SVQN), and 2244 to 2360 (LDGH…LNSI). The segment covering 2368–2382 (EKKGKFTLPGREKQA) has biased composition (basic and acidic residues). Residues 2368-2394 (EKKGKFTLPGREKQATSDVQESTQESA) are disordered. Residues 2383-2393 (TSDVQESTQES) show a composition bias toward polar residues. Spectrin repeat units follow at residues 2432-2513 (DERK…TLKK), 2514-2620 (NKES…KYSQ), 2621-2717 (QVVE…ETLE), 2718-2831 (PLHL…QLEF), 2832-2933 (KLEE…FIQN), 2934-3036 (TCNE…EKIK), 3037-3142 (QLDT…NMVL), 3143-3248 (ELSP…DLRT), 3249-3352 (NVLN…AQET), 3353-3465 (EAER…MWCE), 3466-3573 (ELKQ…KVQK), 3574-3679 (NKEL…SNEV), 3680-3777 (LKSS…ECRT), 3778-3880 (SQLN…KIME), 3881-3986 (SLPQ…VTQE), and 3987-4086 (QNEL…LPAV). Ser-2781 bears the Phosphoserine mark. Composition is skewed to basic and acidic residues over residues 4073 to 4083 (QEQEGVERDRL) and 4093 to 4102 (VAERDASERK). Disordered regions lie at residues 4073-4162 (QEQE…SGTI), 4184-4232 (DSLN…KTRP), 4335-4363 (EKHS…PVNL), and 4416-4448 (HDND…QGQN). Ser-4108 is modified (phosphoserine). Composition is skewed to basic and acidic residues over residues 4122–4134 (SSVK…EKAE) and 4144–4155 (WKHDKDMEEDRA). One copy of the Spectrin 36 repeat lies at 4229 to 4348 (KTRPEPTEVL…EDQHPTILKK (120 aa)). Positions 4335 to 4356 (EKHSEDQHPTILKKSSEPEHQE) are enriched in basic and acidic residues. Residues 4421-4434 (TQESSASNQASSPE) show a composition bias toward polar residues. Spectrin repeat units lie at residues 4520-4639 (NMTE…RSYQ), 4640-4727 (NEIK…RARY), 4728-4837 (TELS…QSLL), 4838-4943 (QKWE…QALL), 4944-5051 (KHLL…QEKL), 5052-5164 (HQLQ…KIQH), 5165-5266 (LEQL…TQVN), 5267-5391 (QLKT…KAYS), 5392-5487 (NAHG…MLLV), 5488-5589 (KANE…CSEL), 5590-5704 (QGIG…QWQD), 5705-5799 (FTTS…PQLA), 5800-5907 (EMIK…RVAI), 5908-6017 (RKQE…VKKL), 6018-6135 (KETF…EETW), 6136-6243 (RLWQ…LRHF), and 6244-6355 (TNQR…PGLE). A Phosphoserine modification is found at Ser-5785. Over residues 6354–6367 (LEDEKEASENETDM) the composition is skewed to acidic residues. The disordered stretch occupies residues 6354–6508 (LEDEKEASEN…GTDGGKEGPR (155 aa)). Phosphoserine occurs at positions 6361, 6384, 6411, 6428, 6429, 6430, and 6459. The span at 6368 to 6384 (EDPREIQTDSWRKRGES) shows a compositional bias: basic and acidic residues. 3 Spectrin repeats span residues 6461 to 6549 (SCPE…KLKI), 6550 to 6665 (KQNL…QCQD), and 6666 to 6782 (FHQL…SFDE). Positions 6463-6474 (PEHHYKQMEGDR) are enriched in basic and acidic residues. Positions 6477–6489 (PPVPPASSTPYKP) are enriched in pro residues. Over residues 6490–6499 (PYGKLLLPPG) the composition is skewed to low complexity. Residues 6769-6824 (GTQNPASPLPSFDEVDSGDQPPATSVPAPRAKQFRAVRTTEGEEETESRVPGSTRP) are disordered. The KASH domain occupies 6826–6885 (RSFLSRVVRAALPLQLLLLLLLLLACLLPSSEEDYSCTQANNFARSFYPMLRYTNGPPPT). A helical; Anchor for type IV membrane protein membrane pass occupies residues 6835–6855 (AALPLQLLLLLLLLLACLLPS). The Perinuclear space segment spans residues 6856 to 6885 (SEEDYSCTQANNFARSFYPMLRYTNGPPPT). The segment at 6872–6885 (FYPMLRYTNGPPPT) is sufficient for interaction with SUN2.

The protein belongs to the nesprin family. In terms of assembly, core component of LINC complexes which are composed of inner nuclear membrane SUN domain-containing proteins coupled to outer nuclear membrane KASH domain-containing nesprins. SUN and KASH domain-containing proteins seem to bind each other promiscuously; however, some LINC complex constituents are tissue- or cell type-specific. At least SUN1/2-containing core LINC complexes are proposed to be hexameric composed of three protomers of each KASH and SUN domain-containing protein. The SUN2:SYNE2/KASH2 complex is a heterohexamer; the homotrimeric cloverleave-like conformation of the SUN domain is a prerequisite for LINC complex formation in which three separate SYNE2/KASH2 peptides bind at the interface of adjacent SUN domains. Interacts with EMD, LMNA, MKS3 and F-actin via its N-terminal domain. Interacts with DCTN1 and DYNC1I1/2; suggesting the association with the dynein-dynactin motor complex. Associates with kinesin motor complexes. Interacts with TMEM67. Interacts (via KASH domain) with TMEM258. Interacts with BROX; this interaction promotes SYN2 ubiquitination and facilitates the relaxation of mechanical stress imposed by compressive actin fibers at the rupture site. Post-translationally, the disulfid bond with SUN2 is required for stability of the SUN2:SYNE2/KASH2 LINC complex under tensile forces though not required for the interaction. Ubiquitinated, targeting it for degradation. Widely expressed, with higher level in kidney, adult and fetal liver, stomach and placenta. Weakly expressed in skeletal muscle and brain. Isoform 5 is highly expressed in pancreas, skeletal muscle and heart.

It is found in the nucleus outer membrane. Its subcellular location is the sarcoplasmic reticulum membrane. The protein resides in the cell membrane. The protein localises to the cytoplasm. It localises to the cytoskeleton. It is found in the mitochondrion. Its subcellular location is the nucleus. The protein resides in the nucleoplasm. The protein localises to the myofibril. It localises to the sarcomere. It is found in the z line. Its subcellular location is the cell junction. The protein resides in the focal adhesion. Multi-isomeric modular protein which forms a linking network between organelles and the actin cytoskeleton to maintain the subcellular spatial organization. As a component of the LINC (LInker of Nucleoskeleton and Cytoskeleton) complex involved in the connection between the nuclear lamina and the cytoskeleton. The nucleocytoplasmic interactions established by the LINC complex play an important role in the transmission of mechanical forces across the nuclear envelope and in nuclear movement and positioning. Specifically, SYNE2 and SUN2 assemble in arrays of transmembrane actin-associated nuclear (TAN) lines which are bound to F-actin cables and couple the nucleus to retrograde actin flow during actin-dependent nuclear movement. May be involved in nucleus-centrosome attachment. During interkinetic nuclear migration (INM) at G2 phase and nuclear migration in neural progenitors its LINC complex association with SUN1/2 and probable association with cytoplasmic dynein-dynactin motor complexes functions to pull the nucleus toward the centrosome; SYNE1 and SYNE2 may act redundantly. During INM at G1 phase mediates respective LINC complex association with kinesin to push the nucleus away from the centrosome. Involved in nuclear migration in retinal photoreceptor progenitors. Required for centrosome migration to the apical cell surface during early ciliogenesis. Facilitates the relaxation of mechanical stress imposed by compressive actin fibers at the rupture site through its nteraction with SYN2. This chain is Nesprin-2, found in Homo sapiens (Human).